We begin with the raw amino-acid sequence, 232 residues long: 5'-methylthioadenosine/S-adenosylhomocysteine nucleosidase (232 aa).

Glu12 (proton acceptor) is an active-site residue. Residues Gly78, Ile152, and 173-174 (ME) contribute to the substrate site. The active-site Proton donor is the Asp197.

The protein belongs to the PNP/UDP phosphorylase family. MtnN subfamily. In terms of assembly, homodimer.

It catalyses the reaction S-adenosyl-L-homocysteine + H2O = S-(5-deoxy-D-ribos-5-yl)-L-homocysteine + adenine. The enzyme catalyses S-methyl-5'-thioadenosine + H2O = 5-(methylsulfanyl)-D-ribose + adenine. The catalysed reaction is 5'-deoxyadenosine + H2O = 5-deoxy-D-ribose + adenine. The protein operates within amino-acid biosynthesis; L-methionine biosynthesis via salvage pathway; S-methyl-5-thio-alpha-D-ribose 1-phosphate from S-methyl-5'-thioadenosine (hydrolase route): step 1/2. Catalyzes the irreversible cleavage of the glycosidic bond in both 5'-methylthioadenosine (MTA) and S-adenosylhomocysteine (SAH/AdoHcy) to adenine and the corresponding thioribose, 5'-methylthioribose and S-ribosylhomocysteine, respectively. Also cleaves 5'-deoxyadenosine, a toxic by-product of radical S-adenosylmethionine (SAM) enzymes, into 5-deoxyribose and adenine. Thus, is required for in vivo function of the radical SAM enzymes biotin synthase and lipoic acid synthase, that are inhibited by 5'-deoxyadenosine accumulation. The protein is 5'-methylthioadenosine/S-adenosylhomocysteine nucleosidase of Escherichia coli O7:K1 (strain IAI39 / ExPEC).